The following is an 833-amino-acid chain: G-type lectin S-receptor-like serine/threonine-protein kinase RKS1 (833 aa).

The signal sequence occupies residues 1-18; the sequence is MKVVFVIFFFFLFQFCIS. The 126-residue stretch at 19 to 144 folds into the Bulb-type lectin domain; the sequence is VDTIMRRQSL…VTGRSFWESF (126 aa). At 19-440 the chain is on the extracellular side; sequence VDTIMRRQSL…NGLSGKRRVL (422 aa). Residues Asn79, Asn92, Asn100, Asn109, Asn228, and Asn256 are each glycosylated (N-linked (GlcNAc...) asparagine). An EGF-like domain is found at 280–330; it reads PKEQCDNYAHCGPNGYCDSPSSKTFECTCLPGFEPKFPRHWFLRDSSGGCT. 3 disulfides stabilise this stretch: Cys284–Cys296, Cys290–Cys306, and Cys308–Cys329. The region spanning 338-421 is the PAN domain; sequence CSEKDGFVKL…SGQDFYIRVD (84 aa). N-linked (GlcNAc...) asparagine glycosylation is found at Asn363 and Asn376. 2 cysteine pairs are disulfide-bonded: Cys369–Cys396 and Cys373–Cys379. Residues 441-461 form a helical membrane-spanning segment; that stretch reads LILISLIAAVMLLTVILFCVV. The Cytoplasmic segment spans residues 462–833; that stretch reads RERRKSNRHR…DVTFSDIQGR (372 aa). The Protein kinase domain maps to 515–800; sequence FSSQNKLGAG…NLPNPKHPAF (286 aa). ATP is bound by residues 521–529 and Lys543; that span reads LGAGGFGPV. Phosphoserine occurs at positions 549 and 564. A caM-binding region spans residues 604–621; that stretch reads EQRAELDWPKRMEIVRGI. Asp640 (proton acceptor) is an active-site residue. 2 positions are modified to phosphoserine: Ser644 and Ser657. Thr674 is subject to Phosphothreonine. A phosphoserine mark is found at Ser717 and Ser821.

The protein belongs to the protein kinase superfamily. Ser/Thr protein kinase family.

The protein resides in the cell membrane. The catalysed reaction is L-seryl-[protein] + ATP = O-phospho-L-seryl-[protein] + ADP + H(+). It carries out the reaction L-threonyl-[protein] + ATP = O-phospho-L-threonyl-[protein] + ADP + H(+). The sequence is that of G-type lectin S-receptor-like serine/threonine-protein kinase RKS1 (RKS1) from Arabidopsis thaliana (Mouse-ear cress).